Consider the following 266-residue polypeptide: Phosphate import ATP-binding protein PstB 1 (266 aa).

The ABC transporter domain maps to 18-261; that stretch reads AQTSNLSFYY…PTNQLTEQYV (244 aa). 50-57 serves as a coordination point for ATP; that stretch reads GPSGCGKT.

It belongs to the ABC transporter superfamily. Phosphate importer (TC 3.A.1.7) family. The complex is composed of two ATP-binding proteins (PstB), two transmembrane proteins (PstC and PstA) and a solute-binding protein (PstS).

The protein localises to the cell inner membrane. The catalysed reaction is phosphate(out) + ATP + H2O = ADP + 2 phosphate(in) + H(+). Its function is as follows. Part of the ABC transporter complex PstSACB involved in phosphate import. Responsible for energy coupling to the transport system. The chain is Phosphate import ATP-binding protein PstB 1 from Gloeobacter violaceus (strain ATCC 29082 / PCC 7421).